The sequence spans 445 residues: Glucose-6-phosphate isomerase (445 aa).

The active-site Proton donor is Glu287. Residues His308 and Lys422 contribute to the active site.

This sequence belongs to the GPI family.

It is found in the cytoplasm. The enzyme catalyses alpha-D-glucose 6-phosphate = beta-D-fructose 6-phosphate. The protein operates within carbohydrate biosynthesis; gluconeogenesis. Its pathway is carbohydrate degradation; glycolysis; D-glyceraldehyde 3-phosphate and glycerone phosphate from D-glucose: step 2/4. In terms of biological role, catalyzes the reversible isomerization of glucose-6-phosphate to fructose-6-phosphate. The sequence is that of Glucose-6-phosphate isomerase from Bacteroides fragilis (strain ATCC 25285 / DSM 2151 / CCUG 4856 / JCM 11019 / LMG 10263 / NCTC 9343 / Onslow / VPI 2553 / EN-2).